The following is a 338-amino-acid chain: MSKLFSEYKLKDVTLKNRIVMSPMCMYSVENKDGIATDFHFAHYVSRAAGGTGLVILEATAVQEVGRISEFDLGLWNDEQVPALKRLVDGLHYHGAKAGIQLAHAGRKAVLPGEIVAPSAIPFDEKSAKPVELTKEAIKEVVADFKRAAYRAKEAGFDVIEIHAAHGYLIHQFLSPISNRREDNYGGPAGNRYKILSDIIKAVKEVWDGPIIVRVSATDYAHGGLQLEDHIPFAKWMKADGVELIDVSTGGLVNVEPPVFPGYQVPFADEIRRGAGIATGALGLITRGEQAEEILCNERADLIIIGRELLRNPYFAKEAAETLGETIEAPKQYSRAWK.

22-25 is an FMN binding site; that stretch reads SPMC. A substrate-binding site is contributed by Tyr27. The FMN site is built by Ala59 and Gln101. 163-166 is a binding site for substrate; the sequence is HAAH. Residues Arg214 and 306–307 contribute to the FMN site; that span reads GR.

It belongs to the NADH:flavin oxidoreductase/NADH oxidase family. NamA subfamily. In terms of assembly, homotetramer. The cofactor is FMN.

It catalyses the reaction A + NADPH + H(+) = AH2 + NADP(+). Functionally, catalyzes the reduction of the double bond of an array of alpha,beta-unsaturated aldehydes and ketones. It also reduces the nitro group of nitroester and nitroaromatic compounds. It could have a role in detoxification processes. This Listeria innocua serovar 6a (strain ATCC BAA-680 / CLIP 11262) protein is NADPH dehydrogenase.